Consider the following 520-residue polypeptide: Phosphoenolpyruvate carboxykinase (ATP) (520 aa).

Substrate-binding residues include Arg-61, Phe-196, and Lys-202. ATP-binding positions include Lys-202, His-222, and 238 to 246 (GLSGTGKTT). The Mn(2+) site is built by Lys-202 and His-222. Asp-259 contacts Mn(2+). ATP is bound by residues Glu-287, Arg-324, 443 to 444 (RI), and Thr-449. A substrate-binding site is contributed by Arg-324.

It belongs to the phosphoenolpyruvate carboxykinase (ATP) family. The cofactor is Mn(2+).

It localises to the cytoplasm. The catalysed reaction is oxaloacetate + ATP = phosphoenolpyruvate + ADP + CO2. It participates in carbohydrate biosynthesis; gluconeogenesis. Its function is as follows. Involved in the gluconeogenesis. Catalyzes the conversion of oxaloacetate (OAA) to phosphoenolpyruvate (PEP) through direct phosphoryl transfer between the nucleoside triphosphate and OAA. In Amoebophilus asiaticus (strain 5a2), this protein is Phosphoenolpyruvate carboxykinase (ATP).